The following is a 207-amino-acid chain: Guanylate kinase (207 aa).

The Guanylate kinase-like domain maps to 4-184 (GILFIISAPS…AINDLRTIII (181 aa)). 11-18 (APSGTGKS) is a binding site for ATP.

The protein belongs to the guanylate kinase family.

The protein localises to the cytoplasm. It carries out the reaction GMP + ATP = GDP + ADP. Essential for recycling GMP and indirectly, cGMP. This chain is Guanylate kinase, found in Buchnera aphidicola subsp. Schizaphis graminum (strain Sg).